Here is a 385-residue protein sequence, read N- to C-terminus: Hemagglutinin-esterase (385 aa).

The N-terminal stretch at 1 to 11 (MLIIFLFFNFC) is a signal peptide. Residues 1-121 (MLIIFLFFNF…SNDVWIFNKV (121 aa)) are esterase domain 1. Residues 12–361 (YGFNEPLNVV…LNCFYDPLPI (350 aa)) are Virion surface-facing. Ser34 acts as the Nucleophile in catalysis. Residues Cys38 and Cys59 are joined by a disulfide bond. Residues Asn83, Asn110, Asn145, Asn171, Asn196, and Asn251 are each glycosylated (N-linked (GlcNAc...) asparagine; by host). A disulfide bridge connects residues Cys107 and Cys155. A receptor binding region spans residues 122-239 (RFYRALYSNM…GSYKIFSTGF (118 aa)). 2 disulfides stabilise this stretch: Cys183-Cys249 and Cys191-Cys222. The segment at 240–352 (VLSIPTKALC…NCPTSAYIKL (113 aa)) is esterase domain 2. A disulfide bond links Cys280 and Cys285. A glycan (N-linked (GlcNAc...) asparagine; by host) is linked at Asn289. Residues Asp299 and His302 each act as charge relay system in the active site. Cysteines 320 and 344 form a disulfide. Residue Asn331 is glycosylated (N-linked (GlcNAc...) asparagine; by host). The chain crosses the membrane as a helical span at residues 362–382 (ILQGILLFLALLFIVFLLFLV). Residues 383-385 (YHG) lie on the Intravirion side of the membrane.

Belongs to the influenza type C/coronaviruses hemagglutinin-esterase family. As to quaternary structure, homodimer; disulfide-linked. Forms a complex with the M protein in the pre-Golgi. Associates then with S-M complex to form a ternary complex S-M-HE. N-glycosylated in the host RER.

It localises to the virion membrane. The protein resides in the host cell membrane. It carries out the reaction N-acetyl-9-O-acetylneuraminate + H2O = N-acetylneuraminate + acetate + H(+). The catalysed reaction is N-acetyl-4-O-acetylneuraminate + H2O = N-acetylneuraminate + acetate + H(+). Its function is as follows. Structural protein that makes short spikes at the surface of the virus. Contains receptor binding and receptor-destroying activities. Mediates de-O-acetylation of N-acetyl-4-O-acetylneuraminic acid, which is probably the receptor determinant recognized by the virus on the surface of erythrocytes and susceptible cells. This receptor-destroying activity is important for virus release as it probably helps preventing self-aggregation and ensures the efficient spread of the progeny virus from cell to cell. May serve as a secondary viral attachment protein for initiating infection, the spike protein being the major one. May become a target for both the humoral and the cellular branches of the immune system. This chain is Hemagglutinin-esterase, found in Human coronavirus HKU1 (isolate N2) (HCoV-HKU1).